The chain runs to 321 residues: Anthranilate phosphoribosyltransferase (321 aa).

5-phospho-alpha-D-ribose 1-diphosphate is bound by residues Gly-72, 75 to 76, Thr-80, 82 to 85, 99 to 107, and Ser-111; these read GD, NVST, and KHGNVSITS. Gly-72 provides a ligand contact to anthranilate. Ser-84 is a binding site for Mg(2+). Asn-102 is a binding site for anthranilate. Arg-157 contributes to the anthranilate binding site. Mg(2+) contacts are provided by Asp-216 and Glu-217.

This sequence belongs to the anthranilate phosphoribosyltransferase family. Homodimer. Mg(2+) is required as a cofactor.

The enzyme catalyses N-(5-phospho-beta-D-ribosyl)anthranilate + diphosphate = 5-phospho-alpha-D-ribose 1-diphosphate + anthranilate. Its pathway is amino-acid biosynthesis; L-tryptophan biosynthesis; L-tryptophan from chorismate: step 2/5. In terms of biological role, catalyzes the transfer of the phosphoribosyl group of 5-phosphorylribose-1-pyrophosphate (PRPP) to anthranilate to yield N-(5'-phosphoribosyl)-anthranilate (PRA). The protein is Anthranilate phosphoribosyltransferase of Methanococcus maripaludis (strain C6 / ATCC BAA-1332).